The following is a 140-amino-acid chain: Acyl-coenzyme A thioesterase PaaI (140 aa).

As to quaternary structure, homotetramer.

It functions in the pathway aromatic compound metabolism; phenylacetate degradation. Its function is as follows. Thioesterase with a preference for ring-hydroxylated phenylacetyl-CoA esters. Hydrolyzes 3,4-dihydroxyphenylacetyl-CoA, 3-hydroxyphenylacetyl-CoA and 4-hydroxyphenylacetyl-CoA. Inactive towards 4-hydroxybenzoyl-CoA and 4-hydroxyphenacyl-CoA. This is Acyl-coenzyme A thioesterase PaaI (paaI) from Escherichia coli (strain K12).